The primary structure comprises 640 residues: tRNA uridine 5-carboxymethylaminomethyl modification enzyme MnmG (640 aa).

FAD is bound at residue 9–14; that stretch reads GGGHAG. An NAD(+)-binding site is contributed by 289–303; sequence GPRYCPSIEDKINKF.

Belongs to the MnmG family. Homodimer. Heterotetramer of two MnmE and two MnmG subunits. The cofactor is FAD.

The protein localises to the cytoplasm. In terms of biological role, NAD-binding protein involved in the addition of a carboxymethylaminomethyl (cmnm) group at the wobble position (U34) of certain tRNAs, forming tRNA-cmnm(5)s(2)U34. This Campylobacter hominis (strain ATCC BAA-381 / DSM 21671 / CCUG 45161 / LMG 19568 / NCTC 13146 / CH001A) protein is tRNA uridine 5-carboxymethylaminomethyl modification enzyme MnmG.